The primary structure comprises 183 residues: Probable GTP-binding protein EngB (183 aa).

An EngB-type G domain is found at 18-183 (DQNEIVFWGR…LSDLVEHFEL (166 aa)). GTP-binding positions include 26–33 (GRSNVGKS), 52–56 (GRTRL), 70–73 (DLPG), 137–140 (TKID), and 166–168 (VSS). Positions 33 and 54 each coordinate Mg(2+).

This sequence belongs to the TRAFAC class TrmE-Era-EngA-EngB-Septin-like GTPase superfamily. EngB GTPase family. It depends on Mg(2+) as a cofactor.

In terms of biological role, necessary for normal cell division and for the maintenance of normal septation. In Metamycoplasma arthritidis (strain 158L3-1) (Mycoplasma arthritidis), this protein is Probable GTP-binding protein EngB.